The primary structure comprises 837 residues: Striatin-interacting protein 1 (837 aa).

Met-1 is modified (N-acetylmethionine). Disordered regions lie at residues 1–67 and 333–423; these read MEPA…ESPD and AASP…KGLP. Pro residues predominate over residues 18 to 35; sequence PQPPPPPPPATAQPPPGA. Low complexity predominate over residues 36-46; it reads PRAAAGLLPGG. A compositionally biased stretch (basic and acidic residues) spans 47–60; the sequence is KAREFNRNQRKDSE. Phosphoserine is present on residues Ser-59, Ser-335, and Ser-339. Positions 333-343 are enriched in low complexity; that stretch reads AASPPASASDS. The span at 356-377 shows a compositional bias: basic and acidic residues; it reads KALIKQDNLDAFNERDPYKADD. Residues 378 to 391 are compositionally biased toward acidic residues; that stretch reads SREEEEENDDDNSL. A Phosphoserine modification is found at Ser-788. The segment at 796-837 is required for STRIPAK core complex formation; it reads DNCLQSVLGQRVDLPEDFQMNYDLWLEREVFSKPISWEELLQ.

The protein belongs to the STRIP family. In terms of assembly, part of the core of STRIPAK complexes composed of PP2A catalytic and scaffolding subunits, the striatins (PP2A regulatory subunits), the striatin-associated proteins MOB4, STRIP1 and STRIP2, PDCD10 and members of the STE20 kinases, such as STK24 and STK26. The STRIPAK complex can be extended by adapter proteins such as SLMAP:SIKE1, CTTNBP2 or CTTNBP2NL. Interacts with CDC42BPB. Interacts with CTTNBP2NL.

The protein localises to the cytoplasm. Its function is as follows. Plays a role in the regulation of cell morphology and cytoskeletal organization. Required in the cortical actin filament dynamics and cell shape. Part of the striatin-interacting phosphatase and kinase (STRIPAK) complexes. STRIPAK complexes have critical roles in protein (de)phosphorylation and are regulators of multiple signaling pathways including Hippo, MAPK, nuclear receptor and cytoskeleton remodeling. Different types of STRIPAK complexes are involved in a variety of biological processes such as cell growth, differentiation, apoptosis, metabolism and immune regulation. The polypeptide is Striatin-interacting protein 1 (STRIP1) (Pongo abelii (Sumatran orangutan)).